The chain runs to 138 residues: ATP synthase epsilon chain (138 aa).

This sequence belongs to the ATPase epsilon chain family. As to quaternary structure, F-type ATPases have 2 components, CF(1) - the catalytic core - and CF(0) - the membrane proton channel. CF(1) has five subunits: alpha(3), beta(3), gamma(1), delta(1), epsilon(1). CF(0) has three main subunits: a, b and c.

The protein localises to the cell membrane. Produces ATP from ADP in the presence of a proton gradient across the membrane. The sequence is that of ATP synthase epsilon chain from Streptococcus equinus (Streptococcus bovis).